The primary structure comprises 313 residues: Protein FixB (313 aa).

255-283 contacts FAD; it reads LYLAVGISGQIQHMVGANASQTIFAINKD.

The protein belongs to the ETF alpha-subunit/FixB family. As to quaternary structure, heterodimer of FixA and FixB.

Its pathway is amine and polyamine metabolism; carnitine metabolism. Required for anaerobic carnitine reduction. May bring reductant to CaiA. The sequence is that of Protein FixB from Escherichia coli O1:K1 / APEC.